Reading from the N-terminus, the 147-residue chain is Peptide methionine sulfoxide reductase MsrB (147 aa).

The region spanning 8 to 131 (KEELKKILTE…NSASLKFIPK (124 aa)) is the MsrB domain. Catalysis depends on Cys-120, which acts as the Nucleophile.

This sequence belongs to the MsrB Met sulfoxide reductase family.

It catalyses the reaction L-methionyl-[protein] + [thioredoxin]-disulfide + H2O = L-methionyl-(R)-S-oxide-[protein] + [thioredoxin]-dithiol. This is Peptide methionine sulfoxide reductase MsrB from Clostridium perfringens (strain SM101 / Type A).